Consider the following 102-residue polypeptide: NADH-quinone oxidoreductase subunit K (102 aa).

A run of 3 helical transmembrane segments spans residues 5-25 (ITHYLTVSALMFTIGIAGIFL), 31-51 (IIILMSIELILLSVNLNFVAF), and 66-86 (FVLTVAAAEAAIGLAILVVFF).

This sequence belongs to the complex I subunit 4L family. In terms of assembly, NDH-1 is composed of 14 different subunits. Subunits NuoA, H, J, K, L, M, N constitute the membrane sector of the complex.

It localises to the cell inner membrane. It catalyses the reaction a quinone + NADH + 5 H(+)(in) = a quinol + NAD(+) + 4 H(+)(out). In terms of biological role, NDH-1 shuttles electrons from NADH, via FMN and iron-sulfur (Fe-S) centers, to quinones in the respiratory chain. The immediate electron acceptor for the enzyme in this species is believed to be ubiquinone. Couples the redox reaction to proton translocation (for every two electrons transferred, four hydrogen ions are translocated across the cytoplasmic membrane), and thus conserves the redox energy in a proton gradient. The chain is NADH-quinone oxidoreductase subunit K from Bartonella grahamii (strain as4aup).